Here is a 584-residue protein sequence, read N- to C-terminus: uncharacterized protein (584 aa).

Disordered regions lie at residues 151–188 (EHPP…DNDL), 222–243 (KRKE…SRAN), 399–418 (SETP…PPDF), and 433–584 (MQPS…AKSD). Over residues 159–188 (TSSEKTRSENRERKKRWREQNEERNKDNDL) the composition is skewed to basic and acidic residues. Over residues 231-243 (LSQNQSSNASRAN) the composition is skewed to low complexity. Polar residues-rich tracts occupy residues 399–409 (SETPTPVSGNG), 433–453 (MQPS…SSEM), 483–500 (NAVT…SGSP), 511–531 (NYSQ…SSLP), and 572–584 (QRSS…AKSD).

This is an uncharacterized protein from Schizosaccharomyces pombe (strain 972 / ATCC 24843) (Fission yeast).